Here is a 110-residue protein sequence, read N- to C-terminus: Large ribosomal subunit protein P2C (110 aa).

Positions 83-110 are disordered; that stretch reads APAAEEAAKEEAKEEEESDEDMGFGLFD. Positions 95 to 104 are enriched in acidic residues; sequence KEEEESDEDM. Serine 100 is subject to Phosphoserine.

The protein belongs to the eukaryotic ribosomal protein P1/P2 family. Component of the large ribosomal subunit (LSU). Mature yeast ribosomes consist of a small (40S) and a large (60S) subunit. The 40S small subunit contains 1 molecule of ribosomal RNA (18S rRNA) and at least 33 different proteins. The large 60S subunit contains 3 rRNA molecules (25S, 5.8S and 5S rRNA) and at least 46 different proteins. The acidic ribosomal P-proteins form the stalk structure of the 60S subunit. They are organized as a pentameric complex in which uL10/P0 interacts with 2 heterodimers of P1 and P2 proteins.

It is found in the cytoplasm. Its function is as follows. Component of the ribosome, a large ribonucleoprotein complex responsible for the synthesis of proteins in the cell. The small ribosomal subunit (SSU) binds messenger RNAs (mRNAs) and translates the encoded message by selecting cognate aminoacyl-transfer RNA (tRNA) molecules. The large subunit (LSU) contains the ribosomal catalytic site termed the peptidyl transferase center (PTC), which catalyzes the formation of peptide bonds, thereby polymerizing the amino acids delivered by tRNAs into a polypeptide chain. The nascent polypeptides leave the ribosome through a tunnel in the LSU and interact with protein factors that function in enzymatic processing, targeting, and the membrane insertion of nascent chains at the exit of the ribosomal tunnel. This chain is Large ribosomal subunit protein P2C (rpp203), found in Schizosaccharomyces pombe (strain 972 / ATCC 24843) (Fission yeast).